Reading from the N-terminus, the 43-residue chain is CNGRDVPCDPDPAKNRRCCSGLECLKPYLHGTWYQDYCYYVEK.

3 disulfides stabilise this stretch: C1–C19, C8–C24, and C18–C38.

It belongs to the neurotoxin 14 (magi-1) family. 02 (HWTX-XVIc) subfamily. In terms of tissue distribution, expressed by the venom gland.

It is found in the secreted. Its function is as follows. Probable ion channel inhibitor. The protein is Hainantoxin F5-22.36 of Cyriopagopus hainanus (Chinese bird spider).